The chain runs to 247 residues: Transmembrane protein 33 (247 aa).

At alanine 2 the chain carries N-acetylalanine. The Lumenal portion of the chain corresponds to 2 to 31; the sequence is ADTTPNGPQGAGAVQFMMTNKLDTAMWLSR. The chain crosses the membrane as a helical span at residues 32–52; sequence LFTVYCSALFVLPLLGLHEAA. Topologically, residues 53 to 100 are cytoplasmic; sequence SFYQRALLANALTSALRLHQRLPHFQLSRAFLAQALLEDSCHYLLYSL. A helical transmembrane segment spans residues 101 to 121; that stretch reads IFVNSYPVTMSIFPVLLFSLL. At 122-155 the chain is on the lumenal side; it reads HAATYTKKVLDARGSNSLPLLRSVLDKLSANQQN. The helical transmembrane segment at 156 to 176 threads the bilayer; sequence ILKFIACNEIFLMPATVFMLF. Topologically, residues 177–247 are cytoplasmic; the sequence is SGQGSLLQPF…FISRLAPTVP (71 aa).

This sequence belongs to the PER33/POM33 family. As to quaternary structure, interacts with EIF2AK3. Interacts with ARL6IP1, isoform RTN1-A of RTN1, isoform RTN2-B of RTN2, isoform 3 of RTN3 and isoform 3 of RTN4. Interacts with RNF5. Interacts with RNF26. Interacts with PKD2. In terms of tissue distribution, prostate cancer and several cancer cell lines (at protein level). Widely expressed. Expressed at higher levels in endocrine-resistant breast cancer cells as compared to endocrine-sensitive breast cancer cells. Expressed at higher levels in early recurrence breast cancer tissues as compared to non-recurrent breast tumors.

The protein localises to the endoplasmic reticulum membrane. It is found in the melanosome. Its subcellular location is the nucleus envelope. Acts as a regulator of the tubular endoplasmic reticulum (ER) network by modulating intracellular calcium homeostasis. Mechanistically, stimulates PKD2 calcium-dependent activity. Suppresses the RTN3/4-induced formation of the ER tubules. Positively regulates PERK-mediated and IRE1-mediated unfolded protein response signaling. Plays an essential role in VEGF-mediated release of Ca(2+) from ER stores during angiogenesis. Also plays a role in the modulation of innate immune signaling through the cGAS-STING pathway by interacting with RNF26. Participates in lipid metabolism by acting as a downstream effector of the pyruvate kinase/PKM. Forms a complex with RNF5 to facilitate polyubiquitination and subsequent degradation of SCAP on the ER membrane. In Homo sapiens (Human), this protein is Transmembrane protein 33 (TMEM33).